The chain runs to 141 residues: Large ribosomal subunit protein uL11 (141 aa).

Belongs to the universal ribosomal protein uL11 family. As to quaternary structure, part of the ribosomal stalk of the 50S ribosomal subunit. Interacts with L10 and the large rRNA to form the base of the stalk. L10 forms an elongated spine to which L12 dimers bind in a sequential fashion forming a multimeric L10(L12)X complex. Post-translationally, one or more lysine residues are methylated.

Its function is as follows. Forms part of the ribosomal stalk which helps the ribosome interact with GTP-bound translation factors. The protein is Large ribosomal subunit protein uL11 of Exiguobacterium sp. (strain ATCC BAA-1283 / AT1b).